Reading from the N-terminus, the 515-residue chain is Bifunctional purine biosynthesis protein PurH (515 aa).

In terms of domain architecture, MGS-like spans methionine 1–valine 145.

Belongs to the PurH family.

It catalyses the reaction (6R)-10-formyltetrahydrofolate + 5-amino-1-(5-phospho-beta-D-ribosyl)imidazole-4-carboxamide = 5-formamido-1-(5-phospho-D-ribosyl)imidazole-4-carboxamide + (6S)-5,6,7,8-tetrahydrofolate. It carries out the reaction IMP + H2O = 5-formamido-1-(5-phospho-D-ribosyl)imidazole-4-carboxamide. It participates in purine metabolism; IMP biosynthesis via de novo pathway; 5-formamido-1-(5-phospho-D-ribosyl)imidazole-4-carboxamide from 5-amino-1-(5-phospho-D-ribosyl)imidazole-4-carboxamide (10-formyl THF route): step 1/1. Its pathway is purine metabolism; IMP biosynthesis via de novo pathway; IMP from 5-formamido-1-(5-phospho-D-ribosyl)imidazole-4-carboxamide: step 1/1. The chain is Bifunctional purine biosynthesis protein PurH from Streptococcus pneumoniae (strain P1031).